Here is a 303-residue protein sequence, read N- to C-terminus: Regulatory protein PocR (303 aa).

Residues 195–293 (KKALRYIDAH…QVTPQAYRQQ (99 aa)) enclose the HTH araC/xylS-type domain. 2 DNA-binding regions (H-T-H motif) span residues 212-233 (EDVASHVYLSPYYFSKLFKKYQ) and 260-283 (IASIARNLGFSQTSYFCKVFRQTY).

Its pathway is cofactor biosynthesis; adenosylcobalamin biosynthesis [regulation]. The protein operates within polyol metabolism; 1,2-propanediol degradation [regulation]. In terms of biological role, positive regulatory protein of pdu and cob operons. Positively autoregulates its own expression. This chain is Regulatory protein PocR (pocR), found in Salmonella typhimurium (strain LT2 / SGSC1412 / ATCC 700720).